A 300-amino-acid chain; its full sequence is Urease accessory protein UreD (300 aa).

It belongs to the UreD family. In terms of assembly, ureD, UreF and UreG form a complex that acts as a GTP-hydrolysis-dependent molecular chaperone, activating the urease apoprotein by helping to assemble the nickel containing metallocenter of UreC. The UreE protein probably delivers the nickel.

The protein resides in the cytoplasm. Its function is as follows. Required for maturation of urease via the functional incorporation of the urease nickel metallocenter. This is Urease accessory protein UreD from Prochlorococcus marinus (strain MIT 9312).